The primary structure comprises 397 residues: Arginine biosynthesis bifunctional protein ArgJ (397 aa).

Residues Thr-147, Lys-173, Thr-184, Glu-270, Asn-392, and Thr-397 each coordinate substrate. The active-site Nucleophile is Thr-184.

The protein belongs to the ArgJ family. As to quaternary structure, heterotetramer of two alpha and two beta chains.

The protein resides in the cytoplasm. It catalyses the reaction N(2)-acetyl-L-ornithine + L-glutamate = N-acetyl-L-glutamate + L-ornithine. It carries out the reaction L-glutamate + acetyl-CoA = N-acetyl-L-glutamate + CoA + H(+). The protein operates within amino-acid biosynthesis; L-arginine biosynthesis; L-ornithine and N-acetyl-L-glutamate from L-glutamate and N(2)-acetyl-L-ornithine (cyclic): step 1/1. Its pathway is amino-acid biosynthesis; L-arginine biosynthesis; N(2)-acetyl-L-ornithine from L-glutamate: step 1/4. Catalyzes two activities which are involved in the cyclic version of arginine biosynthesis: the synthesis of N-acetylglutamate from glutamate and acetyl-CoA as the acetyl donor, and of ornithine by transacetylation between N(2)-acetylornithine and glutamate. The chain is Arginine biosynthesis bifunctional protein ArgJ from Streptococcus thermophilus (strain CNRZ 1066).